The sequence spans 206 residues: Ras-related protein RABH1a (206 aa).

Residue 14 to 21 coordinates GTP; the sequence is GDQGVGKT. An Effector region motif is present at residues 36-44; it reads YQATIGIDF. Residues 62 to 66, 120 to 123, and 150 to 151 contribute to the GTP site; these read DTAGQ, NKTD, and SA. S-geranylgeranyl cysteine attachment occurs at residues C204 and C206. C206 carries the cysteine methyl ester modification.

It belongs to the small GTPase superfamily. Rab family.

It localises to the golgi apparatus membrane. Functionally, protein transport. Regulator of membrane traffic from the Golgi apparatus towards the endoplasmic reticulum (ER). This chain is Ras-related protein RABH1a (RABH1A), found in Arabidopsis thaliana (Mouse-ear cress).